A 59-amino-acid chain; its full sequence is Light-harvesting protein B-800-850 alpha chain A (59 aa).

The Cytoplasmic segment spans residues 1–11; the sequence is MNQARIWTVVK. The helical transmembrane segment at 12-35 threads the bilayer; the sequence is PTVGLPLLLGSVTVIAILVHFAVL. His-31 contacts a bacteriochlorophyll. Residues 36 to 59 lie on the Periplasmic side of the membrane; it reads SHTTWFSKYWNGKAAAIESSVNVG.

This sequence belongs to the antenna complex alpha subunit family. In terms of assembly, the core complex is formed by different alpha and beta chains, binding bacteriochlorophyll molecules, and arranged most probably in tetrameric structures disposed around the reaction center. The non-pigmented gamma chains may constitute additional components.

It localises to the cell inner membrane. In terms of biological role, antenna complexes are light-harvesting systems, which transfer the excitation energy to the reaction centers. In Rhodopseudomonas palustris (strain ATCC BAA-98 / CGA009), this protein is Light-harvesting protein B-800-850 alpha chain A (pucAA).